The chain runs to 452 residues: Zinc finger protein 672 (452 aa).

4 consecutive C2H2-type zinc fingers follow at residues 14-36 (YSCS…ERAH), 42-64 (FRCL…RRTH), 70-92 (YICS…LGAH), and 99-122 (CPCR…RRQH). A C2H2-type 5; degenerate zinc finger spans residues 128-150 (RRCPLCARTFRQSALLFHQARAH). C2H2-type zinc fingers lie at residues 163–185 (HRCA…ARIH), 199–221 (HQCG…LQTH), 227–249 (FKCP…QRTH), 255–277 (YACG…RRSH), 283–305 (HACA…QRIH), 311–333 (FACP…RRTH), 339–361 (YRCE…RRNH), 367–389 (HKCP…RKTH), and 395–417 (AECA…QRAH).

This sequence belongs to the krueppel C2H2-type zinc-finger protein family.

It localises to the nucleus. May be involved in transcriptional regulation. In Homo sapiens (Human), this protein is Zinc finger protein 672.